Here is a 1194-residue protein sequence, read N- to C-terminus: UPF0507 protein PICST_55861 (1194 aa).

Residues 324–475 (QSYDPEAVKF…LSSSLSDELS (152 aa)) form the VPS9 domain.

It belongs to the UPF0507 family.

The polypeptide is UPF0507 protein PICST_55861 (Scheffersomyces stipitis (strain ATCC 58785 / CBS 6054 / NBRC 10063 / NRRL Y-11545) (Yeast)).